The chain runs to 131 residues: Insertion element IS1 protein InsB (131 aa).

Belongs to the transposase 27 family.

Absolutely required for transposition of IS1. This Shigella flexneri protein is Insertion element IS1 protein InsB (insB1).